Reading from the N-terminus, the 770-residue chain is Proprotein convertase subtilisin/kexin type 7 (770 aa).

The N-terminal stretch at 1-36 is a signal peptide; that stretch reads MPKGRQKVPHLDAHLGLPICLWLELAIFFLVPQVMG. A propeptide spanning residues 37–140 is cleaved from the precursor; sequence LSEAGGLDIL…EQTLLKRAKR (104 aa). Residues 141 to 666 lie on the Extracellular side of the membrane; it reads SIHFNDPKYP…YTITPNTLKT (526 aa). The Peptidase S8 domain maps to 152–472; that stretch reads QWHLNNRRSP…FGLLNAWRLV (321 aa). N166 and N174 each carry an N-linked (GlcNAc...) asparagine glycan. The Charge relay system role is filled by D186. The segment at 195–228 is disordered; sequence DIAPNYSPEGSYDLNSNDPDPMPHPDEENGNHHG. The segment covering 215 to 225 has biased composition (basic and acidic residues); the sequence is PMPHPDEENGN. H227 (charge relay system) is an active-site residue. N240 carries an N-linked (GlcNAc...) asparagine glycan. S405 functions as the Charge relay system in the catalytic mechanism. Residues 480–617 form the P/Homo B domain; it reads SVPYLASYVS…QLTLYGSMWS (138 aa). A glycan (N-linked (GlcNAc...) asparagine) is linked at N510. Residues 667–687 form a helical membrane-spanning segment; sequence LVLVGCFSVFWTIYYMLEVCL. At 688-770 the chain is on the cytoplasmic side; sequence SQRNKASTHG…LLQGKSGQIC (83 aa).

The protein belongs to the peptidase S8 family. The cofactor is Ca(2+). In terms of tissue distribution, widely expressed. Expressed in brain, lung, muscle, heart, liver, kidney, spleen and thymus.

It is found in the golgi apparatus. Its subcellular location is the trans-Golgi network membrane. With respect to regulation, inhibited by zinc and copper. Serine endoprotease that processes various proproteins by cleavage at paired basic amino acids, recognizing the RXXX[KR]R consensus motif. Likely functions in the constitutive secretory pathway. This is Proprotein convertase subtilisin/kexin type 7 (Pcsk7) from Mus musculus (Mouse).